The sequence spans 935 residues: 2-oxoglutarate dehydrogenase E1 component (935 aa).

Belongs to the alpha-ketoglutarate dehydrogenase family. As to quaternary structure, homodimer. Part of the 2-oxoglutarate dehydrogenase (OGDH) complex composed of E1 (2-oxoglutarate dehydrogenase), E2 (dihydrolipoamide succinyltransferase) and E3 (dihydrolipoamide dehydrogenase); the complex contains multiple copies of the three enzymatic components (E1, E2 and E3). Thiamine diphosphate is required as a cofactor.

The catalysed reaction is N(6)-[(R)-lipoyl]-L-lysyl-[protein] + 2-oxoglutarate + H(+) = N(6)-[(R)-S(8)-succinyldihydrolipoyl]-L-lysyl-[protein] + CO2. E1 component of the 2-oxoglutarate dehydrogenase (OGDH) complex which catalyzes the decarboxylation of 2-oxoglutarate, the first step in the conversion of 2-oxoglutarate to succinyl-CoA and CO(2). The protein is 2-oxoglutarate dehydrogenase E1 component (sucA) of Haemophilus influenzae (strain ATCC 51907 / DSM 11121 / KW20 / Rd).